The primary structure comprises 156 residues: Ribosomal RNA large subunit methyltransferase H (156 aa).

Residues leucine 73, glycine 104, and 123–128 each bind S-adenosyl-L-methionine; that span reads ISSMTL.

Belongs to the RNA methyltransferase RlmH family. In terms of assembly, homodimer.

It localises to the cytoplasm. The enzyme catalyses pseudouridine(1915) in 23S rRNA + S-adenosyl-L-methionine = N(3)-methylpseudouridine(1915) in 23S rRNA + S-adenosyl-L-homocysteine + H(+). In terms of biological role, specifically methylates the pseudouridine at position 1915 (m3Psi1915) in 23S rRNA. This is Ribosomal RNA large subunit methyltransferase H from Burkholderia multivorans (strain ATCC 17616 / 249).